The sequence spans 494 residues: Sugiol synthase (494 aa).

The chain crosses the membrane as a helical span at residues 3–23 (SFSLLAALFFISAATWFISSR). C437 provides a ligand contact to heme.

Belongs to the cytochrome P450 family. The cofactor is heme. As to expression, expressed in roots.

The protein localises to the membrane. The catalysed reaction is ferruginol + 2 reduced [NADPH--hemoprotein reductase] + 2 O2 = sugiol + 2 oxidized [NADPH--hemoprotein reductase] + 3 H2O + 2 H(+). It carries out the reaction ferruginol + reduced [NADPH--hemoprotein reductase] + O2 = 11-hydroxyferruginol + oxidized [NADPH--hemoprotein reductase] + H2O + H(+). It catalyses the reaction 11-hydroxyferruginol + 2 reduced [NADPH--hemoprotein reductase] + 2 O2 = 11-hydroxysugiol + 2 oxidized [NADPH--hemoprotein reductase] + 3 H2O + 2 H(+). It functions in the pathway secondary metabolite biosynthesis; terpenoid biosynthesis. Monooxygenase that oxidizes ferruginol to produce sugiol. Oxidizes ferruginol at C-12 to produce 11-hydroxyferruginol. Can oxidize 11-hydroxyferruginol to 11-hydroxysugiol. These products are intermediates in tanshinone biosynthesis. This is Sugiol synthase from Salvia miltiorrhiza (Chinese sage).